Here is a 212-residue protein sequence, read N- to C-terminus: Mediator of RNA polymerase II transcription subunit 20 (212 aa).

This sequence belongs to the Mediator complex subunit 20 family. In terms of assembly, component of the Mediator complex, which is composed of MED1, MED4, MED6, MED7, MED8, MED9, MED10, MED11, MED12, MED13, MED13L, MED14, MED15, MED16, MED17, MED18, MED19, MED20, MED21, MED22, MED23, MED24, MED25, MED26, MED27, MED29, MED30, MED31, CCNC, CDK8 and CDC2L6/CDK11. The MED12, MED13, CCNC and CDK8 subunits form a distinct module termed the CDK8 module. Mediator containing the CDK8 module is less active than Mediator lacking this module in supporting transcriptional activation. Individual preparations of the Mediator complex lacking one or more distinct subunits have been variously termed ARC, CRSP, DRIP, PC2, SMCC and TRAP. Interacts with PPARG.

It localises to the nucleus. Component of the Mediator complex, a coactivator involved in the regulated transcription of nearly all RNA polymerase II-dependent genes. Mediator functions as a bridge to convey information from gene-specific regulatory proteins to the basal RNA polymerase II transcription machinery. Mediator is recruited to promoters by direct interactions with regulatory proteins and serves as a scaffold for the assembly of a functional preinitiation complex with RNA polymerase II and the general transcription factors. In Rattus norvegicus (Rat), this protein is Mediator of RNA polymerase II transcription subunit 20 (Med20).